The chain runs to 247 residues: E3 ubiquitin-protein ligase RNF182 (247 aa).

The segment at 20 to 68 (CKICYNRYNLKQRKPKVLECCHRVCAKCLYKIIDFGDSPQGVIVCPFCR) adopts an RING-type zinc-finger fold. A run of 2 helical transmembrane segments spans residues 184 to 204 (VLVW…IYLL) and 211 to 231 (LGVV…VYGF).

Interacts with ATP6V0C. As to expression, up-regulated in neuronal cells subjected to cell death-inducing injuries, such as oxygen and glucose deprivation (at protein level). Could be up-regulated in Alzheimer disease brains. Highly expressed in innate immune organs such as lymph nodes and spleen and in immune cells such as macrophages and dendritic cells.

It is found in the membrane. The protein resides in the cytoplasm. It catalyses the reaction S-ubiquitinyl-[E2 ubiquitin-conjugating enzyme]-L-cysteine + [acceptor protein]-L-lysine = [E2 ubiquitin-conjugating enzyme]-L-cysteine + N(6)-ubiquitinyl-[acceptor protein]-L-lysine.. It functions in the pathway protein modification; protein ubiquitination. Its function is as follows. E3 ubiquitin-protein ligase that mediates the ubiquitination of ATP6V0C and targets it to degradation via the ubiquitin-proteasome pathway. Also plays a role in the inhibition of TLR-triggered innate immune response by mediating 'Lys'-48-linked ubiquitination and subsequent degradation of NF-kappa-B component RELA. The protein is E3 ubiquitin-protein ligase RNF182 (RNF182) of Homo sapiens (Human).